Consider the following 872-residue polypeptide: Alanine--tRNA ligase (872 aa).

Zn(2+) is bound by residues histidine 567, histidine 571, cysteine 669, and histidine 673.

The protein belongs to the class-II aminoacyl-tRNA synthetase family. The cofactor is Zn(2+).

The protein localises to the cytoplasm. The enzyme catalyses tRNA(Ala) + L-alanine + ATP = L-alanyl-tRNA(Ala) + AMP + diphosphate. Functionally, catalyzes the attachment of alanine to tRNA(Ala) in a two-step reaction: alanine is first activated by ATP to form Ala-AMP and then transferred to the acceptor end of tRNA(Ala). Also edits incorrectly charged Ser-tRNA(Ala) and Gly-tRNA(Ala) via its editing domain. The sequence is that of Alanine--tRNA ligase from Streptococcus pyogenes serotype M28 (strain MGAS6180).